The following is a 666-amino-acid chain: Putative cysteine-rich receptor-like protein kinase 20 (666 aa).

The N-terminal stretch at 1–23 (MSSLICFIFLFLFSFITSFTASA) is a signal peptide. At 24–264 (QNPFYLYHNC…PRPGKGGNSS (241 aa)) the chain is on the extracellular side. Gnk2-homologous domains follow at residues 27-131 (FYLY…NRNI) and 137-241 (TDGG…NYEF). N-linked (GlcNAc...) asparagine glycans are attached at residues asparagine 32, asparagine 42, asparagine 60, asparagine 69, and asparagine 103. Asparagine 262 is a glycosylation site (N-linked (GlcNAc...) asparagine). The helical transmembrane segment at 265 to 285 (VIVIAVVVPITVLFLLFVAFF) threads the bilayer. Residues 286-666 (SVRRAKRKKT…EASITSVAPR (381 aa)) are Cytoplasmic-facing. One can recognise a Protein kinase domain in the interval 344–623 (FLPINKLGQG…QMLTTSSIAL (280 aa)). Residues 350-358 (LGQGGFGEV) and lysine 372 each bind ATP. Tyrosine 417 is modified (phosphotyrosine). Catalysis depends on aspartate 469, which acts as the Proton acceptor. The residue at position 509 (threonine 509) is a Phosphothreonine. At tyrosine 517 the chain carries Phosphotyrosine.

This sequence belongs to the protein kinase superfamily. Ser/Thr protein kinase family. CRK subfamily.

The protein resides in the membrane. The enzyme catalyses L-seryl-[protein] + ATP = O-phospho-L-seryl-[protein] + ADP + H(+). It catalyses the reaction L-threonyl-[protein] + ATP = O-phospho-L-threonyl-[protein] + ADP + H(+). The sequence is that of Putative cysteine-rich receptor-like protein kinase 20 (CRK20) from Arabidopsis thaliana (Mouse-ear cress).